The sequence spans 274 residues: MKKTQTWIITCIYLQLLLFNPLVKTKGICGKRVTDDVKDVTKLVANLPKDYKIALKYVPGMDVLPSHCWISVMVEQLSVSLTDLLDKFSNISEGLSNYSIIDKLVKIVDDLVECTEGYSFENVKKAPKSPELRLFTPEEFFRIFNRSIDAFKDLETVASKSSECVVSSTLSPDKDSRVSVTKPFMLPPVAASSLRNDSSSSNRKASNSIGDSNLQWAAMALPAFFSLVIGFAFGALYWKKKQPNLTRTVENIQINEEDNEISMLQEKEREFQEV.

The first 25 residues, 1–25, serve as a signal peptide directing secretion; it reads MKKTQTWIITCIYLQLLLFNPLVKT. Topologically, residues 26-215 are extracellular; sequence KGICGKRVTD…SNSIGDSNLQ (190 aa). Disulfide bonds link Cys-29/Cys-114 and Cys-68/Cys-164. N-linked (GlcNAc...) asparagine glycosylation is found at Asn-90, Asn-97, Asn-145, and Asn-196. The chain crosses the membrane as a helical span at residues 216 to 238; sequence WAAMALPAFFSLVIGFAFGALYW. At 239–274 the chain is on the cytoplasmic side; sequence KKKQPNLTRTVENIQINEEDNEISMLQEKEREFQEV.

Belongs to the SCF family. In terms of assembly, homodimer, non-covalently linked. Post-translationally, a soluble form is produced by proteolytic processing of the extracellular domain.

It is found in the cytoplasm. It localises to the cytoskeleton. Its subcellular location is the cell membrane. The protein resides in the cell projection. The protein localises to the lamellipodium. It is found in the filopodium. It localises to the secreted. Its function is as follows. Stimulates the proliferation of mast cells. Able to augment the proliferation of both myeloid and lymphoid hematopoietic progenitors in bone marrow culture. Also mediates cell-cell adhesion. Acts synergistically with other cytokines, probably interleukins. This chain is Kit ligand (KITLG), found in Canis lupus familiaris (Dog).